Here is a 420-residue protein sequence, read N- to C-terminus: Glucose-1-phosphate adenylyltransferase (420 aa).

Residues tyrosine 107, glycine 173, 188–189, and serine 206 contribute to the alpha-D-glucose 1-phosphate site; that span reads EK.

Belongs to the bacterial/plant glucose-1-phosphate adenylyltransferase family. In terms of assembly, homotetramer.

The enzyme catalyses alpha-D-glucose 1-phosphate + ATP + H(+) = ADP-alpha-D-glucose + diphosphate. It functions in the pathway glycan biosynthesis; glycogen biosynthesis. Its function is as follows. Involved in the biosynthesis of ADP-glucose, a building block required for the elongation reactions to produce glycogen. Catalyzes the reaction between ATP and alpha-D-glucose 1-phosphate (G1P) to produce pyrophosphate and ADP-Glc. This is Glucose-1-phosphate adenylyltransferase from Shewanella frigidimarina (strain NCIMB 400).